A 206-amino-acid polypeptide reads, in one-letter code: uncharacterized protein (206 aa).

The interval 147–206 is disordered; it reads REEKAQKSKSKSRNQDERGSPLDERLGPKVSDLTLMERIFQVRRKPRKSRRDRRSRVSKR. Residues 159-173 are compositionally biased toward basic and acidic residues; the sequence is RNQDERGSPLDERLG. Residues 187–206 are compositionally biased toward basic residues; the sequence is QVRRKPRKSRRDRRSRVSKR.

This is an uncharacterized protein from Schizosaccharomyces pombe (strain 972 / ATCC 24843) (Fission yeast).